We begin with the raw amino-acid sequence, 143 residues long: MSLSGKDKSVVKAFWDKMSPKSAEIGAEALGRMLTVYPQTKTYFSHWADVGPDSAQVKKHGATIMAAVGDAVGKIDDLVGGLSALSELHAFKLRVDPANFRILAHNIILVTAMYFPTDFTPEIHVSVDKFLQNLALALAERYR.

A Globin domain is found at 2–143; the sequence is SLSGKDKSVV…LALALAERYR (142 aa). O2 is bound at residue His-60. His-89 contacts heme b.

Belongs to the globin family. As to quaternary structure, heterotetramer of two alpha chains and two beta chains. Red blood cells.

Involved in oxygen transport from gills to the various peripheral tissues. The chain is Hemoglobin subunit alpha-A (hbaa) from Seriola quinqueradiata (Five-ray yellowtail).